Here is a 103-residue protein sequence, read N- to C-terminus: Large ribosomal subunit protein uL24 (103 aa).

Residues Y70 to N103 form a disordered region.

This sequence belongs to the universal ribosomal protein uL24 family. Part of the 50S ribosomal subunit.

Functionally, one of two assembly initiator proteins, it binds directly to the 5'-end of the 23S rRNA, where it nucleates assembly of the 50S subunit. Its function is as follows. One of the proteins that surrounds the polypeptide exit tunnel on the outside of the subunit. This is Large ribosomal subunit protein uL24 from Lactiplantibacillus plantarum (strain ATCC BAA-793 / NCIMB 8826 / WCFS1) (Lactobacillus plantarum).